The chain runs to 119 residues: Large ribosomal subunit protein uL24 (119 aa).

This sequence belongs to the universal ribosomal protein uL24 family. As to quaternary structure, part of the 50S ribosomal subunit.

One of two assembly initiator proteins, it binds directly to the 5'-end of the 23S rRNA, where it nucleates assembly of the 50S subunit. In terms of biological role, located at the polypeptide exit tunnel on the outside of the subunit. In Methanococcus vannielii, this protein is Large ribosomal subunit protein uL24.